A 346-amino-acid chain; its full sequence is DNA polymerase IV 2 (346 aa).

Residues 9-191 (ILHVDLDQFL…RTVEALWGVG (183 aa)) enclose the UmuC domain. Residues aspartate 13 and aspartate 111 each contribute to the Mg(2+) site. Glutamate 112 is a catalytic residue.

Belongs to the DNA polymerase type-Y family. Monomer. Mg(2+) serves as cofactor.

The protein localises to the cytoplasm. The enzyme catalyses DNA(n) + a 2'-deoxyribonucleoside 5'-triphosphate = DNA(n+1) + diphosphate. Poorly processive, error-prone DNA polymerase involved in untargeted mutagenesis. Copies undamaged DNA at stalled replication forks, which arise in vivo from mismatched or misaligned primer ends. These misaligned primers can be extended by PolIV. Exhibits no 3'-5' exonuclease (proofreading) activity. May be involved in translesional synthesis, in conjunction with the beta clamp from PolIII. This chain is DNA polymerase IV 2 (dinB2), found in Mycobacterium bovis (strain ATCC BAA-935 / AF2122/97).